The primary structure comprises 364 residues: Histidinol-phosphate aminotransferase (364 aa).

The disordered stretch occupies residues 1 to 46 (MQPRDLSDHSPYVPGRGVEEVARDRGLDPDDLIKLSSNENPHGPSP). Residues 17–33 (GVEEVARDRGLDPDDLI) are compositionally biased toward basic and acidic residues. Lysine 222 is modified (N6-(pyridoxal phosphate)lysine).

The protein belongs to the class-II pyridoxal-phosphate-dependent aminotransferase family. Histidinol-phosphate aminotransferase subfamily. Pyridoxal 5'-phosphate serves as cofactor.

It catalyses the reaction L-histidinol phosphate + 2-oxoglutarate = 3-(imidazol-4-yl)-2-oxopropyl phosphate + L-glutamate. Its pathway is amino-acid biosynthesis; L-histidine biosynthesis; L-histidine from 5-phospho-alpha-D-ribose 1-diphosphate: step 7/9. The sequence is that of Histidinol-phosphate aminotransferase from Halorubrum lacusprofundi (strain ATCC 49239 / DSM 5036 / JCM 8891 / ACAM 34).